A 281-amino-acid chain; its full sequence is Pantothenate synthetase (281 aa).

30–37 (MGYLHEGH) provides a ligand contact to ATP. The Proton donor role is filled by H37. Q61 contributes to the (R)-pantoate binding site. Residue Q61 participates in beta-alanine binding. Residue 147-150 (GEKD) coordinates ATP. A (R)-pantoate-binding site is contributed by Q153. ATP contacts are provided by residues I176 and 184–187 (KSSR).

The protein belongs to the pantothenate synthetase family. Homodimer.

It is found in the cytoplasm. The enzyme catalyses (R)-pantoate + beta-alanine + ATP = (R)-pantothenate + AMP + diphosphate + H(+). It functions in the pathway cofactor biosynthesis; (R)-pantothenate biosynthesis; (R)-pantothenate from (R)-pantoate and beta-alanine: step 1/1. Its function is as follows. Catalyzes the condensation of pantoate with beta-alanine in an ATP-dependent reaction via a pantoyl-adenylate intermediate. The protein is Pantothenate synthetase of Clostridium botulinum (strain Kyoto / Type A2).